The following is a 110-amino-acid chain: Integration host factor subunit alpha (110 aa).

The protein belongs to the bacterial histone-like protein family. In terms of assembly, heterodimer of an alpha and a beta chain.

Functionally, this protein is one of the two subunits of integration host factor, a specific DNA-binding protein that functions in genetic recombination as well as in transcriptional and translational control. The protein is Integration host factor subunit alpha of Methylococcus capsulatus (strain ATCC 33009 / NCIMB 11132 / Bath).